A 168-amino-acid chain; its full sequence is Crossover junction endodeoxyribonuclease RuvC (168 aa).

Residues Asp-9, Glu-70, and Asp-145 contribute to the active site. Positions 9, 70, and 145 each coordinate Mg(2+).

This sequence belongs to the RuvC family. As to quaternary structure, homodimer which binds Holliday junction (HJ) DNA. The HJ becomes 2-fold symmetrical on binding to RuvC with unstacked arms; it has a different conformation from HJ DNA in complex with RuvA. In the full resolvosome a probable DNA-RuvA(4)-RuvB(12)-RuvC(2) complex forms which resolves the HJ. Mg(2+) is required as a cofactor.

It is found in the cytoplasm. It carries out the reaction Endonucleolytic cleavage at a junction such as a reciprocal single-stranded crossover between two homologous DNA duplexes (Holliday junction).. Its function is as follows. The RuvA-RuvB-RuvC complex processes Holliday junction (HJ) DNA during genetic recombination and DNA repair. Endonuclease that resolves HJ intermediates. Cleaves cruciform DNA by making single-stranded nicks across the HJ at symmetrical positions within the homologous arms, yielding a 5'-phosphate and a 3'-hydroxyl group; requires a central core of homology in the junction. The consensus cleavage sequence is 5'-(A/T)TT(C/G)-3'. Cleavage occurs on the 3'-side of the TT dinucleotide at the point of strand exchange. HJ branch migration catalyzed by RuvA-RuvB allows RuvC to scan DNA until it finds its consensus sequence, where it cleaves and resolves the cruciform DNA. This Chlamydia pneumoniae (Chlamydophila pneumoniae) protein is Crossover junction endodeoxyribonuclease RuvC.